A 382-amino-acid chain; its full sequence is Dual-specificity RNA methyltransferase RlmN (382 aa).

Glu-91 (proton acceptor) is an active-site residue. Residues 97 to 339 (EEDRGTLCIS…TTIRKTRGDD (243 aa)) enclose the Radical SAM core domain. An intrachain disulfide couples Cys-104 to Cys-344. [4Fe-4S] cluster is bound by residues Cys-111, Cys-115, and Cys-118. S-adenosyl-L-methionine contacts are provided by residues 165 to 166 (GE), Ser-197, 219 to 221 (SLH), and Asn-301. Cys-344 functions as the S-methylcysteine intermediate in the catalytic mechanism.

Belongs to the radical SAM superfamily. RlmN family. [4Fe-4S] cluster is required as a cofactor.

The protein localises to the cytoplasm. The catalysed reaction is adenosine(2503) in 23S rRNA + 2 reduced [2Fe-2S]-[ferredoxin] + 2 S-adenosyl-L-methionine = 2-methyladenosine(2503) in 23S rRNA + 5'-deoxyadenosine + L-methionine + 2 oxidized [2Fe-2S]-[ferredoxin] + S-adenosyl-L-homocysteine. It catalyses the reaction adenosine(37) in tRNA + 2 reduced [2Fe-2S]-[ferredoxin] + 2 S-adenosyl-L-methionine = 2-methyladenosine(37) in tRNA + 5'-deoxyadenosine + L-methionine + 2 oxidized [2Fe-2S]-[ferredoxin] + S-adenosyl-L-homocysteine. In terms of biological role, specifically methylates position 2 of adenine 2503 in 23S rRNA and position 2 of adenine 37 in tRNAs. m2A2503 modification seems to play a crucial role in the proofreading step occurring at the peptidyl transferase center and thus would serve to optimize ribosomal fidelity. The protein is Dual-specificity RNA methyltransferase RlmN of Albidiferax ferrireducens (strain ATCC BAA-621 / DSM 15236 / T118) (Rhodoferax ferrireducens).